A 296-amino-acid chain; its full sequence is MNNNAFHFPVLLDAICKLIEDLPVKSDLIYIDSTLGEGVHAKAILEKYDFLSLVGIERDPQILERARQFLSIFEERITYFNDWFDNFFVNYPLNVKANFILVDLGISMFHYKGSKKGFSFLEDEPLDMRLCSSSCKISAAEIVNTYSKYDLEALIYDLSNEHYSRRISKAIVEYRKIKKIETTKELQSIISKVYPFSKVKINPATKTFQALRIYVNDELARLKRSLPFWVENLAKDGILAIITFHSIEDRIVKDFFRSLSCDLYAKISKKPIMPSFDEIKKNKPSRSAKLRVVKKL.

S-adenosyl-L-methionine contacts are provided by residues 38–40 (GVH), Glu57, Phe80, Asp103, and His110.

This sequence belongs to the methyltransferase superfamily. RsmH family.

Its subcellular location is the cytoplasm. It catalyses the reaction cytidine(1402) in 16S rRNA + S-adenosyl-L-methionine = N(4)-methylcytidine(1402) in 16S rRNA + S-adenosyl-L-homocysteine + H(+). Functionally, specifically methylates the N4 position of cytidine in position 1402 (C1402) of 16S rRNA. This chain is Ribosomal RNA small subunit methyltransferase H, found in Borreliella burgdorferi (strain ATCC 35210 / DSM 4680 / CIP 102532 / B31) (Borrelia burgdorferi).